The sequence spans 529 residues: MEPEFDHFQSQMDSDNTHQSTMFNVQDNNAILMSGMENVLQSPRQLQAAAQAQQQAAAQAQQQQVQAQQVQAQQAQQQQQQQQNQQQQQQQQNQQNQQQQQNQQQQSQQMTQQQLQQLMPPPPTSDTSNFNDNISYFVYGSQFTVPRRYSIVKCIGHGAYGVVCSAKDNLTGEKVAIKKISKAFDNLKDTKRTLREIHLLRHFKHENLISIKDILKPNSKEQFEDVYIVSELMDTDLHQIITSPQPLSDDHCQYFVYQMLRGLKHIHSANVLHRDLKPSNLLINEDCLLKICDLGLARVEDATHQGFMTEYVATRWYRAPEVILSWNKYTKAIDIWSVGCIFAELLGRKPLFQGKDYIHQITLIIETIGSPSEEDICNIANEQARQFIRNMGNQPKVNFANMFPKANPDAIDLLERMLYFDPSKRLTVEEALAHPYFQSLHDPSDEPICLHKFSLNFEAWDLNRDLLKELIYNEMLAYHPEDPQAPYYTDLNNPNFNLSRIQSSSELFNLLQQQKQQIHQQVNQQSIKN.

2 disordered regions span residues 1–20 and 100–131; these read MEPE…THQS and QQNQ…SNFN. Over residues 8-20 the composition is skewed to polar residues; the sequence is FQSQMDSDNTHQS. Residues 100-117 are compositionally biased toward low complexity; that stretch reads QQNQQQQSQQMTQQQLQQ. A Protein kinase domain is found at 149–439; the sequence is YSIVKCIGHG…EALAHPYFQS (291 aa). ATP-binding positions include 155 to 163 and K178; that span reads IGHGAYGVV. The Proton acceptor role is filled by D275. T309 is modified (phosphothreonine). The short motif at 309 to 311 is the TXY element; the sequence is TEY. At Y311 the chain carries Phosphotyrosine.

The protein belongs to the protein kinase superfamily. CMGC Ser/Thr protein kinase family. MAP kinase subfamily. It depends on Mg(2+) as a cofactor. Dually phosphorylated on Thr-309 and Tyr-311, which activates the enzyme.

It catalyses the reaction L-seryl-[protein] + ATP = O-phospho-L-seryl-[protein] + ADP + H(+). The catalysed reaction is L-threonyl-[protein] + ATP = O-phospho-L-threonyl-[protein] + ADP + H(+). Activated by tyrosine and threonine phosphorylation. Functionally, kinase involved in a signal transduction pathway. This is Extracellular signal-regulated kinase 1 (erkA) from Dictyostelium discoideum (Social amoeba).